The following is a 543-amino-acid chain: Zinc metalloproteinase (543 aa).

The signal sequence occupies residues 1 to 24 (MHPNYYLSPLAVAIALGIASPVKA). The propeptide occupies 25-207 (ADPIPLQKSS…PFVQWDDVKT (183 aa)). A Zn(2+)-binding site is contributed by histidine 377. The active site involves glutamate 378. Zn(2+) contacts are provided by histidine 381 and glutamate 401. Histidine 463 functions as the Proton donor in the catalytic mechanism.

This sequence belongs to the peptidase M4 family. Zn(2+) serves as cofactor.

The protein resides in the secreted. Cleaves collagen, gelatin, casein, alpha-1-antitrypsin, and bovine insulin. May play a role in the pathogenesis of legionnaires disease. The chain is Zinc metalloproteinase from Legionella pneumophila.